Consider the following 579-residue polypeptide: Arginine--tRNA ligase (579 aa).

Positions Pro123–His133 match the 'HIGH' region motif.

Belongs to the class-I aminoacyl-tRNA synthetase family. Monomer.

It localises to the cytoplasm. The enzyme catalyses tRNA(Arg) + L-arginine + ATP = L-arginyl-tRNA(Arg) + AMP + diphosphate. The protein is Arginine--tRNA ligase of Saccharophagus degradans (strain 2-40 / ATCC 43961 / DSM 17024).